The chain runs to 113 residues: Mitochondrial import inner membrane translocase subunit PAM16 like 1 (113 aa).

A mitochondrion-targeting transit peptide spans 1–48; the sequence is MAARVLASVIVMGSGIIARACTQAYRQALANASKTGVAHEATQTIKRG. A J-like region spans residues 55-104; it reads EARQILGVTEKSSWDEILKKYDTLFERNAQNGSFYLQSKVHRAKECLETA.

It belongs to the TIM16/PAM16 family. Expressed at low levels in seedlings, rosettes and inflorescence.

It is found in the mitochondrion inner membrane. Regulates ATP-dependent protein translocation into the mitochondrial matrix. This Arabidopsis thaliana (Mouse-ear cress) protein is Mitochondrial import inner membrane translocase subunit PAM16 like 1.